The primary structure comprises 336 residues: D-erythrose-4-phosphate dehydrogenase (336 aa).

11–12 is a binding site for NAD(+); it reads RI. Substrate is bound by residues 153–155, Arg199, 212–213, and Arg235; these read SCT and TK. Catalysis depends on Cys154, which acts as the Nucleophile. An NAD(+)-binding site is contributed by Asn317.

The protein belongs to the glyceraldehyde-3-phosphate dehydrogenase family. Epd subfamily. Homotetramer.

It localises to the cytoplasm. It carries out the reaction D-erythrose 4-phosphate + NAD(+) + H2O = 4-phospho-D-erythronate + NADH + 2 H(+). It functions in the pathway cofactor biosynthesis; pyridoxine 5'-phosphate biosynthesis; pyridoxine 5'-phosphate from D-erythrose 4-phosphate: step 1/5. Its function is as follows. Catalyzes the NAD-dependent conversion of D-erythrose 4-phosphate to 4-phosphoerythronate. This chain is D-erythrose-4-phosphate dehydrogenase, found in Aeromonas salmonicida (strain A449).